A 325-amino-acid polypeptide reads, in one-letter code: uncharacterized protein (325 aa).

The chain crosses the membrane as a helical span at residues 10–30 (IVFVSLAALVLLVSVSVFIYH). Positions 94–166 (KIAVVDRAGY…EIKAIIAMDI (73 aa)) constitute an AB hydrolase-1 domain.

Its subcellular location is the cell membrane. This is an uncharacterized protein from Bacillus subtilis (strain 168).